We begin with the raw amino-acid sequence, 122 residues long: Small ribosomal subunit protein uS13 (122 aa).

Residues 99–122 form a disordered region; sequence RGQRTHTNARTRKGPAKAIAGKKK.

Belongs to the universal ribosomal protein uS13 family. In terms of assembly, part of the 30S ribosomal subunit. Forms a loose heterodimer with protein S19. Forms two bridges to the 50S subunit in the 70S ribosome.

Functionally, located at the top of the head of the 30S subunit, it contacts several helices of the 16S rRNA. In the 70S ribosome it contacts the 23S rRNA (bridge B1a) and protein L5 of the 50S subunit (bridge B1b), connecting the 2 subunits; these bridges are implicated in subunit movement. Contacts the tRNAs in the A and P-sites. This chain is Small ribosomal subunit protein uS13, found in Sinorhizobium fredii (strain NBRC 101917 / NGR234).